Here is a 275-residue protein sequence, read N- to C-terminus: Calcium uniporter protein, mitochondrial (275 aa).

Residues M1–L28 constitute a mitochondrion transit peptide. The Mitochondrial matrix portion of the chain corresponds to E29–A165. Positions V125–R157 form a coiled coil. The chain crosses the membrane as a helical span at residues I166 to W186. At W187–D192 the chain is on the mitochondrial intermembrane side. Residues W191–Y199 carry the Selectivity filter motif. A helical membrane pass occupies residues I193–F213. E195 contributes to the Ca(2+) binding site. The Mitochondrial matrix segment spans residues T214 to H275. The stretch at P244 to K270 forms a coiled coil.

The protein belongs to the MCU (TC 1.A.77) family. Homooligomer.

It localises to the mitochondrion inner membrane. The enzyme catalyses Ca(2+)(in) = Ca(2+)(out). Its activity is regulated as follows. Inhibited by ruthenium red or its derivative Ru360. In terms of biological role, mitochondrial inner membrane calcium uniporter that mediates calcium uptake into mitochondria. Constitutes a pore-forming and calcium-conducting subunit. Mitochondrial calcium homeostasis plays key roles in cellular physiology and regulates cell bioenergetics, cytoplasmic calcium signals and activation of cell death pathways. Sufficient to operate as a pore-forming channel without the need of calcium-sensor or auxiliary subunit. In Dictyostelium discoideum (Social amoeba), this protein is Calcium uniporter protein, mitochondrial.